A 372-amino-acid chain; its full sequence is Cell division protein FtsZ 1 (372 aa).

GTP contacts are provided by residues 51–55 (GAGCN), 138–140 (GTG), Glu169, Arg173, and Asp216. Residues 352-372 (EETPAPSEEETTPVKIDIPEL) form a disordered region.

Belongs to the FtsZ family. Homodimer. Polymerizes to form a dynamic ring structure in a strictly GTP-dependent manner. Interacts directly with several other division proteins.

It localises to the cytoplasm. In terms of biological role, essential cell division protein that forms a contractile ring structure (Z ring) at the future cell division site. The regulation of the ring assembly controls the timing and the location of cell division. One of the functions of the FtsZ ring is to recruit other cell division proteins to the septum to produce a new cell wall between the dividing cells. Binds GTP and shows GTPase activity. This Pyrococcus horikoshii (strain ATCC 700860 / DSM 12428 / JCM 9974 / NBRC 100139 / OT-3) protein is Cell division protein FtsZ 1.